Reading from the N-terminus, the 623-residue chain is Glutathione import ATP-binding protein GsiA (623 aa).

ABC transporter domains lie at 15-269 (VSGL…QTLL) and 325-564 (LRSG…RKLM). Residues 49–56 (GESGSGKS) and 357–364 (GESGSGKS) each bind ATP.

This sequence belongs to the ABC transporter superfamily. Glutathione importer (TC 3.A.1.5.11) family. As to quaternary structure, the complex is composed of two ATP-binding proteins (GsiA), two transmembrane proteins (GsiC and GsiD) and a solute-binding protein (GsiB).

It is found in the cell inner membrane. The enzyme catalyses glutathione(out) + ATP + H2O = glutathione(in) + ADP + phosphate + H(+). Its function is as follows. Part of the ABC transporter complex GsiABCD involved in glutathione import. Responsible for energy coupling to the transport system. The sequence is that of Glutathione import ATP-binding protein GsiA from Salmonella paratyphi A (strain ATCC 9150 / SARB42).